A 375-amino-acid chain; its full sequence is MEVISTNTNGSTIFKNGAIPMNGHQNGTSEHLNGYQNGTSKHQNGHQNGTFEHRNGHQNGTSEQQNGTISHDNGNELLGSSDSIKPGWFSEFSALWPGEAFSLKVEKLLFQGKSDYQDVMLFESATYGKVLTLDGAIQHTENGGFPYTEMIVHLPLGSIPNPKKVLIIGGGIGFTLFEMLRYPSIEKIDIVEIDDVVVDVSRKFFPYLAANFNDPRVTLVLGDGAAFVKAAQAGYYDAIIVDSSDPIGPAKDLFERPFFEAVAKALRPGGVVCTQAESIWLHMHIIKQIIANCRQVFKGSVNYAWTTVPTYPTGVIGYMLCSTEGPEVDFKNPVNPIDKETTQVKSKLGPLKFYNSDIHKAAFILPSFARSMIES.

Composition is skewed to polar residues over residues 24 to 50 and 57 to 77; these read HQNG…QNGT and HQNG…GNEL. The segment at 24 to 77 is disordered; sequence HQNGTSEHLNGYQNGTSKHQNGHQNGTFEHRNGHQNGTSEQQNGTISHDNGNEL. The PABS domain occupies 86-323; the sequence is PGWFSEFSAL…GVIGYMLCST (238 aa). S-adenosyl-L-methionine is bound by residues Gln117, Glu192, and 223–224; that span reads DG. Asp242 (proton acceptor) is an active-site residue. Position 311 (Tyr311) interacts with S-adenosyl-L-methionine.

The protein belongs to the class I-like SAM-binding methyltransferase superfamily. Putrescine methyltransferase family. In terms of tissue distribution, predominantly expressed in roots.

The catalysed reaction is putrescine + S-adenosyl-L-methionine = N-methylputrescine + S-adenosyl-L-homocysteine + H(+). It participates in alkaloid biosynthesis; nicotine biosynthesis. In terms of biological role, involved in the biosynthesis of pyridine alkaloid natural products, leading mainly to the production of anabasine, anatabine, nicotine and nornicotine, effective deterrents against herbivores with antiparasitic and pesticide properties (neurotoxins); nornicotine serves as the precursor in the synthesis of the carcinogen compound N'-nitrosonornicotine (NNN). Methyltransferase that mediates the conversion of putrescine to N-methylputrescine. Promotes leaves ripening. The chain is Putrescine N-methyltransferase 1 from Nicotiana tabacum (Common tobacco).